Here is a 102-residue protein sequence, read N- to C-terminus: uncharacterized protein (102 aa).

In terms of domain architecture, HTH cro/C1-type spans 48 to 102 (LNDKRKSLGIELSMLELQTGVSISTLNRLFQDPSQVRFTTVFLVAQTLGVSLCAI). Residues 59-78 (LSMLELQTGVSISTLNRLFQ) constitute a DNA-binding region (H-T-H motif).

This is an uncharacterized protein from Haemophilus influenzae (strain ATCC 51907 / DSM 11121 / KW20 / Rd).